Here is an 88-residue protein sequence, read N- to C-terminus: Prolevitide (88 aa).

The N-terminal stretch at Met-1–Ala-20 is a signal peptide. Gln-74 bears the Pyrrolidone carboxylic acid mark. Gln-87 bears the Glutamine amide mark.

This sequence belongs to the gastrin/cholecystokinin family. As to expression, expressed by the skin glands.

Its subcellular location is the secreted. This is Prolevitide from Xenopus laevis (African clawed frog).